Consider the following 540-residue polypeptide: uncharacterized protein (540 aa).

Topologically, residues 1-61 (MFSIFKKKTS…TNDSPWQDPT (61 aa)) are cytoplasmic. A helical membrane pass occupies residues 62–82 (YFSSFGKELMFIATCMLAQLL). The Extracellular portion of the chain corresponds to 83–108 (NQAGQTHALCIMNVLSKSFNSEANNQ). Residues 109–129 (AWLMASFPLAAGSFILISGRL) form a helical membrane-spanning segment. Residues 130 to 131 (GD) are Cytoplasmic-facing. A helical membrane pass occupies residues 132–152 (IYGLKKMLIVGYVIVIVWSII). The Extracellular segment spans residues 153 to 169 (SGLSKYSNSDAFFITSR). A helical membrane pass occupies residues 170-190 (AFQGVGIAFILPNIMGLVGHV). The Cytoplasmic segment spans residues 191–203 (YKVGSFRKNIVIS). Residues 204–224 (FIGACAPTGGMFGGLFGGLIV) traverse the membrane as a helical segment. Over 225–232 (TEDPNQWP) the chain is Extracellular. A helical membrane pass occupies residues 233–253 (WVFYAFGIATFLSLLMAWYSI). The Cytoplasmic portion of the chain corresponds to 254 to 272 (PNNVPTNIHGLSMDWTGSA). Residues 273 to 293 (LAIIGLILFNFVWNQAPIVGW) traverse the membrane as a helical segment. Residues 294 to 295 (DK) lie on the Extracellular side of the membrane. Residues 296 to 316 (PYIIVLLIISVIFLVAFFVYE) form a helical membrane-spanning segment. Residues 317–334 (SKYAEVPLLPRAMTKNRH) lie on the Cytoplasmic side of the membrane. The chain crosses the membrane as a helical span at residues 335–355 (MIMILLAVFLGWGSFGIWTFY). Residues 356 to 372 (YVSFQLNLRHYSPVWTG) lie on the Extracellular side of the membrane. A helical transmembrane segment spans residues 373–393 (GTYFVFVIFGSMAAFFVAFSI). Residues 394 to 398 (KRLGP) lie on the Cytoplasmic side of the membrane. A helical transmembrane segment spans residues 399–419 (ALLLCFSLMAFDAGSIMFSVL). At 420–429 (PVEQSYWKLN) the chain is on the extracellular side. The helical transmembrane segment at 430 to 450 (FAMQAILCFGMDLSFPASSII) threads the bilayer. Topologically, residues 451–461 (LSDGLPMQYQG) are cytoplasmic. A helical membrane pass occupies residues 462 to 482 (MAGSLVNTVINYSASLCLGMG). Over 483-502 (GTVEHQINKSGNDLLKGYRA) the chain is Extracellular. A helical membrane pass occupies residues 503-523 (AVYLGVGLASLGVVISVTYML). The Cytoplasmic portion of the chain corresponds to 524 to 540 (ENLWNRHRKSEDRSLEA).

The protein belongs to the major facilitator superfamily.

It is found in the membrane. This is an uncharacterized protein from Saccharomyces cerevisiae (strain ATCC 204508 / S288c) (Baker's yeast).